Consider the following 245-residue polypeptide: MDDASTLIDVKEYSDTEVQKNRVLTLEEWREKWVDGKIGFHQEQGHQLLKKHLDTFLKGENVLRVFFPLCGKAVEMKWFADRGHCVVGVEISELGIREFFTEQNLSYSEEPIMEIPGAKVFKSSSGNISLYCCNLFDLPRVNIGKFDRIWDRGALVAVNPGDRKCYTDIMLSLTRKGFRYLLAVLSYDPTKHPGPPFYVPDAEIKNLFGSTCNIHCLEKVDVFEERHKSWGIDYIVEKLYLLTEK.

Residue serine 14 is modified to Phosphoserine. Residue 29 to 40 (WREKWVDGKIGF) coordinates S-adenosyl-L-methionine. Phenylalanine 40 is a substrate binding site. Lysine 58 bears the N6-acetyllysine mark. S-adenosyl-L-methionine is bound by residues leucine 69, glutamate 90, and arginine 152.

It belongs to the class I-like SAM-binding methyltransferase superfamily. TPMT family. Monomer.

It localises to the cytoplasm. The catalysed reaction is S-adenosyl-L-methionine + a thiopurine = S-adenosyl-L-homocysteine + a thiopurine S-methylether.. The polypeptide is Thiopurine S-methyltransferase (TPMT) (Panthera tigris (Tiger)).